Consider the following 311-residue polypeptide: tRNA-cytidine(32) 2-sulfurtransferase (311 aa).

Residues 47–52 (SGGKDS) carry the PP-loop motif motif. [4Fe-4S] cluster-binding residues include C122, C125, and C213.

This sequence belongs to the TtcA family. Homodimer. The cofactor is Mg(2+). It depends on [4Fe-4S] cluster as a cofactor.

The protein localises to the cytoplasm. It catalyses the reaction cytidine(32) in tRNA + S-sulfanyl-L-cysteinyl-[cysteine desulfurase] + AH2 + ATP = 2-thiocytidine(32) in tRNA + L-cysteinyl-[cysteine desulfurase] + A + AMP + diphosphate + H(+). Its pathway is tRNA modification. Functionally, catalyzes the ATP-dependent 2-thiolation of cytidine in position 32 of tRNA, to form 2-thiocytidine (s(2)C32). The sulfur atoms are provided by the cysteine/cysteine desulfurase (IscS) system. The polypeptide is tRNA-cytidine(32) 2-sulfurtransferase (Shigella flexneri serotype 5b (strain 8401)).